Consider the following 258-residue polypeptide: Small ribosomal subunit protein uS3 (258 aa).

Positions 43–111 constitute a KH type-2 domain; it reads IRKLMSTGLE…QVQLNILEVK (69 aa). Positions 217-258 are disordered; the sequence is AREQASAAPRARGRADRPRGRRDEGAAPQQAAAPAATTGTEA. Basic and acidic residues predominate over residues 229–241; sequence GRADRPRGRRDEG. The segment covering 242-258 has biased composition (low complexity); that stretch reads AAPQQAAAPAATTGTEA.

Belongs to the universal ribosomal protein uS3 family. As to quaternary structure, part of the 30S ribosomal subunit. Forms a tight complex with proteins S10 and S14.

Functionally, binds the lower part of the 30S subunit head. Binds mRNA in the 70S ribosome, positioning it for translation. This chain is Small ribosomal subunit protein uS3, found in Beutenbergia cavernae (strain ATCC BAA-8 / DSM 12333 / CCUG 43141 / JCM 11478 / NBRC 16432 / NCIMB 13614 / HKI 0122).